A 506-amino-acid polypeptide reads, in one-letter code: MSAIVGLCLLSEKVVLSRSLTDEVSKLYKLNRGNVKEPRKYATERMSTQSKPVALQVPVSTIILDYKNEDFIKQNPTYSAMDIIGSPSNTAPQTAFQSIMPSLSALFNTPFIQGAFRHRIISSMGPEISYLVMVIGPPSGFMDTPNVSSAQSSVHTVSNADVDLNDIIAINSTMAKSTKLVSASTLQAMLVNDVYDRCMDLDGILLSQALPFFRNYVNVQSKGSLPPAVAACLNTPIKELFSMGSGKREPLALEFRKDNEGQCIGIVLPKGHEGDTLSSRYPAVFINESEPFSDKERSELSELKRTDSDAYEKLYSETISKHVSDGSYGNRVIISHKMSRLSNGGVKIIGRFKISDFNTVKKNLSSRSGEIDSAKEQWEALSGNGLVTDSNISMLHDKILDTITSNKPGVVLRDGNKKSENIVVCFKNGFPNKKHSLLQLTKNGISVVSLDELTDAGILVESTGPDRVRRSPKVLANKLSSFKGRKVTLDVDNMSTEALIQKLSTL.

2 RNA-binding regions span residues 128–249 (ISYL…GKRE) and 325–355 (DGSYGNRVIISHKMSRLSNGGVKIIGRFKIS).

This sequence belongs to the phytoreovirus protein P7 family.

The protein resides in the virion. Its subcellular location is the host cytoplasm. Probable component of the transcriptional machinery present in the inner capsid. Displays dsRNA binding activity and may play an important role in the sorting of viral RNA and virion assembly. Together with the RNA-directed RNA polymerase P1 and capping enzyme P5, forms an transcriptional complex positioned near the channels situated at each of the five-fold vertices of the core. This is Protein P7 from Alopecurus aequalis (Barnyard grass).